We begin with the raw amino-acid sequence, 284 residues long: MDAIKKKMQAMKLEKDNAMDRALLCEQQARDANLRAEKAEEEARSLQKKIQQIENDLDQTMEQLMQVNAKLDEKDKALQNAESEVAALNRRIQLLEEDLERSEERLATATAKLAEASQAADESERARKILESKGLADEERMDALENQLKEARFMAEEADKKYDEVARKLAMVEADLERAEERAESGESKIVELEEELRVVGNNLKSLEVSEEKANLREEEYKQQIKTLTTRLKEAEARAEFAERSVQKLQKEVDRLEDELVHEKEKYKFICDDLDMTFTELIGI.

Residues 1 to 266 (MDAIKKKMQA…EDELVHEKEK (266 aa)) are a coiled coil.

Belongs to the tropomyosin family. Homodimer. In terms of tissue distribution, expressed in striated skeletal muscle (at protein level).

Functionally, tropomyosin, in association with the troponin complex, plays a central role in the calcium dependent regulation of muscle contraction. In Periplaneta americana (American cockroach), this protein is Tropomyosin Per a 7.0102.